A 321-amino-acid polypeptide reads, in one-letter code: Isoaspartyl peptidase (321 aa).

Threonine 179 functions as the Nucleophile in the catalytic mechanism. Residues 207 to 210 (RVGD) and 230 to 233 (TGTG) contribute to the substrate site.

It belongs to the Ntn-hydrolase family. Heterotetramer of two alpha and two beta chains arranged as a dimer of alpha/beta heterodimers. Post-translationally, autocleaved. Generates the alpha and beta subunits. The N-terminal residue of the beta subunit is thought to be responsible for the nucleophile hydrolase activity. Both subunits undergo further processing at their C-termini. The overexpressed alpha subunit seems to consist of residues 2-161, with an oxidized Met residue and a tightly coordinated Na(+), whereas the overexpressed beta subunit is processed to residue 315 and has 3 oxidized Met residues. Processing of the alpha subunit is inhibited by Zn(2+).

The catalysed reaction is Cleavage of a beta-linked Asp residue from the N-terminus of a polypeptide.. Its function is as follows. Degrades proteins damaged by L-isoaspartyl residue formation (also known as beta-Asp residues). Degrades L-isoaspartyl-containing di- and maybe also tripeptides. Also has L-asparaginase activity, although this may not be its principal function. In terms of biological role, may be involved in glutathione, and possibly other peptide, transport, although these results could also be due to polar effects of disruption. The chain is Isoaspartyl peptidase (iaaA) from Escherichia coli (strain K12).